The sequence spans 372 residues: 18-hydroxynorfluorocurarine reductase (372 aa).

Positions 47, 50, 69, 70, 100, 103, 106, 114, and 172 each coordinate Zn(2+). NADP(+)-binding positions include 197–202 (GLGGIG), K226, 283–285 (LGA), S307, and R354.

The protein belongs to the zinc-containing alcohol dehydrogenase family. As to quaternary structure, homodimer. It depends on Zn(2+) as a cofactor.

The catalysed reaction is (19E)-cur-19-en-17-al + NADP(+) = norfluorocurarine + NADPH + H(+). It catalyses the reaction 17,18-epoxy-17-hydroxycur-19-ene + NADP(+) = 18-hydroxynorfluorocurarine + NADPH + H(+). Its pathway is alkaloid biosynthesis. Its function is as follows. Alcohol dehydrogenase involved in the biosynthesis of curare monoterpene indole alkaloids (MIAs), natural products such as diaboline, a pharmacologically active compound used to regulate blood pressure. Curare alkaloids act as animal glycine receptor antagonists. Catalyzes the conversion of norfluorocurarine to desoxy Wieland-Gumlich aldehyde, and of 18-OH norfluorocurarine to Wieland-Gumlich aldehyde. The sequence is that of 18-hydroxynorfluorocurarine reductase from Strychnos sp.